Consider the following 115-residue polypeptide: Ig heavy chain V-III region W3082 (115 aa).

Residues 1-114 form the Ig-like domain; that stretch reads EVKLEESGGG…WGQGTLVTVS (114 aa). Cysteine 22 and cysteine 98 are disulfide-bonded.

The chain is Ig heavy chain V-III region W3082 from Mus musculus (Mouse).